We begin with the raw amino-acid sequence, 482 residues long: Dual specificity protein phosphatase 10 (482 aa).

The Rhodanese domain maps to 168–285 (PSQGPVIIDC…FKQNHENLCD (118 aa)). Positions 199–215 (KISRRRLQQGKITVLDL) are interaction with MAP kinases. The Tyrosine-protein phosphatase domain maps to 321–464 (ELTPILPFLF…LLEFEEDLNN (144 aa)). Cys408 serves as the catalytic Phosphocysteine intermediate.

This sequence belongs to the protein-tyrosine phosphatase family. Non-receptor class dual specificity subfamily. Monomer. Interacts with MAPK14. In terms of tissue distribution, expressed in keratinocytes (at protein level). Detected in brain.

The protein localises to the cytoplasm. Its subcellular location is the nucleus. The enzyme catalyses O-phospho-L-tyrosyl-[protein] + H2O = L-tyrosyl-[protein] + phosphate. It carries out the reaction O-phospho-L-seryl-[protein] + H2O = L-seryl-[protein] + phosphate. The catalysed reaction is O-phospho-L-threonyl-[protein] + H2O = L-threonyl-[protein] + phosphate. Functionally, protein phosphatase involved in the inactivation of MAP kinases. Has a specificity for the MAPK11/MAPK12/MAPK13/MAPK14 subfamily. It preferably dephosphorylates p38. The chain is Dual specificity protein phosphatase 10 (DUSP10) from Homo sapiens (Human).